The primary structure comprises 63 residues: uncharacterized protein (63 aa).

This is an uncharacterized protein from Rickettsia conorii (strain ATCC VR-613 / Malish 7).